A 718-amino-acid polypeptide reads, in one-letter code: MAALEEEFTLSSVVLSAGPEGLLGVEQSDKTDQFLVTDSGRTVILYKVSDQKPLGSWSVKQGQIITCPAVCNFQTGEYVVVHDNKVLRIWNNEDVNLDKVFKATLSAEVYRILSVQGTEPLVLFKEGAVRGLEALLADPQQKIETVISDEEVIKWTKFFIVFRHRVLIFITEKHGNYFAYVQMFNSRILTKYTLLLGQDENSVVESFTASVDRKFISLMSLSSDGCIYETLIPIRPTDPEKNQSLVRSLLLKAVVSDNTQNGVALTALDQDHVAVLGSPLAASKECLSVWNIKFQTLQTSKELSQGTSGQVWYYGEHLFMLHGKSLTVIPYKCEVSSLAGALGKLKHSQDPGTHVVPHFVNWETPQGCGLGFQNSEQSRRILRRRKTEVSLQPEVPPSKQLLSTIMKDSEKHIEVEVRKFLALKQTPDFHTVVGDTVTGLLERCKAEPSFYPRNCLMQLIQTHVLSYSLCPDLMEIALKKKDVQLLQLCLQQFPDIPESVTCACLKIFLSIGDDSLQETDVSMESVFDYSNSVHDEKMEEQTEILQNGFNPEEDKCNNCDQELNKKPQDETKESTSCPVVQKRAALLNAILHSAFSETFLLPHLKDIPAQHITLFLKYLYFLYLKCSENATMTLPGIHPPTLNQIMDWICLLLDANFTVVVMMPEAKRLLINLYKLVKSQITVYSELNKIEVSFRELQKLNQEKNNRGLYSIEVLELF.

The residue at position 346 (K346) is an N6-methyllysine.

Interacts with UTP4. Interacts with FBL/fibrillarin in a transcription-dependent manner. May associate with the proposed t-UTP subcomplex of the SSU processome containing at least UTP4, WDR43, HEATR1, UTP15, WDR75.

It is found in the nucleus. The protein resides in the nucleolus. Functionally, ribosome biogenesis factor. May be required for both optimal rDNA transcription and small subunit (SSU) pre-rRNA processing at sites A', A0, 1 and 2b. The protein is Nucleolar protein 11 (NOL11) of Pongo abelii (Sumatran orangutan).